The chain runs to 168 residues: Ubiquitin-conjugating enzyme E2 2 (168 aa).

One can recognise a UBC core domain in the interval 4–150; sequence PAKRRLMRDF…VRETVENSWN (147 aa). The Glycyl thioester intermediate role is filled by C88. The segment at 143–168 is disordered; it reads ETVENSWNEDDEDEDEDEDEDIDDAE. The segment covering 149-168 has biased composition (acidic residues); sequence WNEDDEDEDEDEDEDIDDAE.

The protein belongs to the ubiquitin-conjugating enzyme family.

It is found in the cytoplasm. The protein resides in the nucleus. The enzyme catalyses S-ubiquitinyl-[E1 ubiquitin-activating enzyme]-L-cysteine + [E2 ubiquitin-conjugating enzyme]-L-cysteine = [E1 ubiquitin-activating enzyme]-L-cysteine + S-ubiquitinyl-[E2 ubiquitin-conjugating enzyme]-L-cysteine.. The protein operates within protein modification; protein ubiquitination. In terms of biological role, catalyzes the covalent attachment of ubiquitin to other proteins. Plays a role in transcription regulation by catalyzing the monoubiquitination of histone H2B to form H2BK123ub1. H2BK123ub1 gives a specific tag for epigenetic transcriptional activation and is also a prerequisite for H3K4me and H3K79me formation. Also involved in postreplication repair of UV-damaged DNA, in N-end rule-dependent protein degradation and in sporulation. This chain is Ubiquitin-conjugating enzyme E2 2 (UBC2), found in Debaryomyces hansenii (strain ATCC 36239 / CBS 767 / BCRC 21394 / JCM 1990 / NBRC 0083 / IGC 2968) (Yeast).